The primary structure comprises 37 residues: Large ribosomal subunit protein bL36 (37 aa).

It belongs to the bacterial ribosomal protein bL36 family.

This Magnetococcus marinus (strain ATCC BAA-1437 / JCM 17883 / MC-1) protein is Large ribosomal subunit protein bL36.